Here is a 311-residue protein sequence, read N- to C-terminus: Succinate dehydrogenase [ubiquinone] iron-sulfur subunit 2, mitochondrial (311 aa).

Residues 1–63 (MILRRTLPRL…EEIRDHRRGD (63 aa)) constitute a mitochondrion transit peptide. The interval 1–70 (MILRRTLPRL…RGDAAAASPA (70 aa)) is disordered. Over residues 51–63 (AKEEEIRDHRRGD) the composition is skewed to basic and acidic residues. The 2Fe-2S ferredoxin-type domain maps to 77 to 168 (FRVYRWSPDA…ATTVTPLPHM (92 aa)). Residues cysteine 128, cysteine 133, and cysteine 148 each coordinate [2Fe-2S] cluster. A 4Fe-4S ferredoxin-type domain is found at 211-241 (ERKRLDGLYECILCACCSAACPSYWWNAEAF). 3 residues coordinate [4Fe-4S] cluster: cysteine 221, cysteine 224, and cysteine 227. Cysteine 231 is a [3Fe-4S] cluster binding site. Residue tryptophan 236 coordinates a ubiquinone. Residues cysteine 279 and cysteine 285 each coordinate [3Fe-4S] cluster. Cysteine 289 contacts [4Fe-4S] cluster.

This sequence belongs to the succinate dehydrogenase/fumarate reductase iron-sulfur protein family. Component of complex II composed of eight subunits in plants: four classical SDH subunits SDH1, SDH2, SDH3 and SDH4 (a flavoprotein (FP), an iron-sulfur protein (IP), and a cytochrome b composed of a large and a small subunit.), as well as four subunits unknown in mitochondria from bacteria and heterotrophic eukaryotes. Requires [2Fe-2S] cluster as cofactor. [3Fe-4S] cluster is required as a cofactor. [4Fe-4S] cluster serves as cofactor.

The protein resides in the mitochondrion inner membrane. It catalyses the reaction a quinone + succinate = fumarate + a quinol. It functions in the pathway carbohydrate metabolism; tricarboxylic acid cycle; fumarate from succinate (eukaryal route): step 1/1. In terms of biological role, iron-sulfur protein (IP) subunit of succinate dehydrogenase (SDH) that is involved in complex II of the mitochondrial electron transport chain and is responsible for transferring electrons from succinate to ubiquinone (coenzyme Q). This Oryza sativa subsp. japonica (Rice) protein is Succinate dehydrogenase [ubiquinone] iron-sulfur subunit 2, mitochondrial.